A 463-amino-acid polypeptide reads, in one-letter code: Glycine--tRNA ligase (463 aa).

Substrate is bound by residues Arg-98 and Glu-174. ATP contacts are provided by residues 206–208 (RNE), 216–221 (FRTREF), 290–291 (EL), and 334–337 (GADR). 221-225 (FEQME) is a binding site for substrate. Residue 330–334 (EPSLG) coordinates substrate.

It belongs to the class-II aminoacyl-tRNA synthetase family. In terms of assembly, homodimer.

The protein localises to the cytoplasm. It carries out the reaction tRNA(Gly) + glycine + ATP = glycyl-tRNA(Gly) + AMP + diphosphate. Catalyzes the attachment of glycine to tRNA(Gly). This chain is Glycine--tRNA ligase, found in Staphylococcus aureus (strain bovine RF122 / ET3-1).